A 213-amino-acid chain; its full sequence is Orotate phosphoribosyltransferase (213 aa).

Lys26 is a binding site for 5-phospho-alpha-D-ribose 1-diphosphate. 34–35 is an orotate binding site; it reads FF. Residues 72–73, Arg99, Lys100, Lys103, His105, and 124–132 each bind 5-phospho-alpha-D-ribose 1-diphosphate; these read YK and DDVITAGTA. Orotate-binding residues include Thr128 and Arg156.

This sequence belongs to the purine/pyrimidine phosphoribosyltransferase family. PyrE subfamily. Homodimer. Mg(2+) serves as cofactor.

It carries out the reaction orotidine 5'-phosphate + diphosphate = orotate + 5-phospho-alpha-D-ribose 1-diphosphate. It participates in pyrimidine metabolism; UMP biosynthesis via de novo pathway; UMP from orotate: step 1/2. Catalyzes the transfer of a ribosyl phosphate group from 5-phosphoribose 1-diphosphate to orotate, leading to the formation of orotidine monophosphate (OMP). This Escherichia coli O157:H7 protein is Orotate phosphoribosyltransferase.